A 129-amino-acid chain; its full sequence is Glycine cleavage system H protein (129 aa).

The Lipoyl-binding domain maps to 24–106 (LVRVGISAFA…HGEGWLLVLR (83 aa)). Lys-65 bears the N6-lipoyllysine mark.

The protein belongs to the GcvH family. As to quaternary structure, the glycine cleavage system is composed of four proteins: P, T, L and H. It depends on (R)-lipoate as a cofactor.

In terms of biological role, the glycine cleavage system catalyzes the degradation of glycine. The H protein shuttles the methylamine group of glycine from the P protein to the T protein. This is Glycine cleavage system H protein from Parasynechococcus marenigrum (strain WH8102).